Here is a 755-residue protein sequence, read N- to C-terminus: uncharacterized protein (755 aa).

The next 9 helical transmembrane spans lie at 46–66 (LGLG…GGLY), 70–90 (LKTI…GTIV), 93–113 (GWGL…YLAV), 118–138 (GAMV…NVST), 143–163 (FTSL…IWPF), 411–431 (IAHL…IFVL), 446–466 (LLGT…IQDP), 482–502 (ALLR…ALIL), and 514–534 (ALLS…GLAF).

It belongs to the YccS/YhfK family.

It is found in the cell membrane. This is an uncharacterized protein from Synechocystis sp. (strain ATCC 27184 / PCC 6803 / Kazusa).